The chain runs to 553 residues: MNKNTSTVVSPSLLEKDPAFQMITIAKETGLGLKVLGGINRNEGPLVYIQEIIPGGDCYKDGRLKPGDQLVSVNKESMIGVSFEEAKSIITGAKLRLESAWEIAFIRQKSDNIQPENLSCTSLIEASGEYGPQASTLSLFSSPPEILIPKTSSTPKTNNDILSSCEIKTGYNKTVQIPITSENSTVGLSNTDVASAWTENYGLQEKISLNPSVRFKAEKLEMALNYLGIQPTKEQHQALRQQVQADSKGTVSFGDFVQVARNLFCLQLDEVNVGAHEISNILDSQLLPCDSSEADEMERLKCERDDALKEVNTLKEKLLESDKQRKQLTEELQNVKQEAKAVVEETRALRSRIHLAEAAQRQAHGMEMDYEEVIRLLEAKITELKAQLADYSDQNKESVQDLKKRIMVLDCQLRKSEMARKTFEASTEKLLHFVEAIQEVFSDNSTPLSNLSERRAVLASQTSLTPLGRNGRSIPATLALESKELVKSVRALLDMDCLPYGWEEAYTADGIKYFINHVTQTTSWIHPVMSVLNLSRSEENEEDCSRELPNQKS.

Phosphoserine occurs at positions 10, 12, 99, and 212. A PDZ domain is found at 19-105; the sequence is AFQMITIAKE…RLESAWEIAF (87 aa). Residues 291 to 417 are a coiled coil; sequence SSEADEMERL…VLDCQLRKSE (127 aa). Ser-463 carries the post-translational modification Phosphoserine. Residues 496 to 529 form the WW domain; it reads DCLPYGWEEAYTADGIKYFINHVTQTTSWIHPVM.

Interacts with STX4A. In terms of processing, phosphorylated on Ser-99 by PKB/AKT2 after insulin treatment. Phosphorylation on Ser-99 abolishes the interaction with STX4A.

It is found in the cytoplasm. In terms of biological role, plays a role in the translocation of transport vesicles from the cytoplasm to the plasma membrane. Inhibits the translocation of SLC2A4 from intracellular vesicles to the plasma membrane by STX4A binding and preventing the interaction between STX4A and VAMP2. Stimulation with insulin disrupts the interaction with STX4A, leading to increased levels of SLC2A4 at the plasma membrane. May also play a role in the regulation of insulin release by pancreatic beta cells after stimulation by glucose. This Homo sapiens (Human) protein is Syntaxin-binding protein 4 (STXBP4).